We begin with the raw amino-acid sequence, 126 residues long: Fluoride-specific ion channel FluC (126 aa).

The next 4 membrane-spanning stretches (helical) occupy residues 1-21 (MTATAFVAIGGGIGAVLRFHA), 33-53 (AVFPWGTFAINVVGSLLMGVL), 72-92 (VGVLGGFTTFSAFSLETALLV), and 97-117 (IGLAALYAAGSVVAGVTGLFL). Gly76 and Thr79 together coordinate Na(+).

Belongs to the fluoride channel Fluc/FEX (TC 1.A.43) family.

It localises to the cell inner membrane. The enzyme catalyses fluoride(in) = fluoride(out). Its activity is regulated as follows. Na(+) is not transported, but it plays an essential structural role and its presence is essential for fluoride channel function. Fluoride-specific ion channel. Important for reducing fluoride concentration in the cell, thus reducing its toxicity. In Novosphingobium aromaticivorans (strain ATCC 700278 / DSM 12444 / CCUG 56034 / CIP 105152 / NBRC 16084 / F199), this protein is Fluoride-specific ion channel FluC.